A 706-amino-acid chain; its full sequence is Protein argonaute (706 aa).

The interval 1–108 (MGKEALLNLY…ELFRDFLTKT (108 aa)) is N-terminal domain. Positions 109 to 165 (KVKDKFISDFYKKFRDKITVQGKNRKIALIPEVNEKVLKSEEGYFLLHLDLKFRIQP) are linker L1. One can recognise a PAZ domain in the interval 168–259 (TLQTLLERND…YPATILKPVL (92 aa)). Residues 263–334 (NLEDEERNEV…AKGKNTKVIT (72 aa)) are linker L2. Positions 335 to 448 (NLRKFLELCR…YDFVKRELLK (114 aa)) are mid domain. The 276-residue stretch at 419-694 (LVIVFLEEYP…ITKLMLRGIE (276 aa)) folds into the Piwi domain. The tract at residues 449–706 (KMIPSQVILN…KKEGDIMYWL (258 aa)) is PIWI domain. Active-site residues include Asp-502, Glu-541, and Asp-571. A Mn(2+)-binding site is contributed by Asp-502. Asp-571 serves as a coordination point for Mn(2+). A PIWI box region spans residues 612 to 650 (FIKGYFYKLSEDSVILATYNQVYEGTHQPIKVRKVYGEL). Asp-683 is an active-site residue. Asp-683 is a binding site for Mn(2+).

The protein belongs to the argonaute family. Long pAgo subfamily. It depends on Mg(2+) as a cofactor.

A DNA-guided RNA endonuclease. Uses short ssDNA sequences as guides (gDNA) to bind complementary target strands, resulting in cleavage of the target RNA. The cleavage site is 10 nucleotides downstream of the residue base paired with the 5'-end of the gDNA. Binds ssDNA better than ssRNA, binds dsDNA and DNA-RNA hybrids but does not bind dsRNA. A 2 nucleotide 3'-overhang (possibly on the guide strand) may help load nucleic acids into the complex. This Aquifex aeolicus (strain VF5) protein is Protein argonaute.